The sequence spans 87 residues: Cell division topological specificity factor (87 aa).

It belongs to the MinE family.

Its function is as follows. Prevents the cell division inhibition by proteins MinC and MinD at internal division sites while permitting inhibition at polar sites. This ensures cell division at the proper site by restricting the formation of a division septum at the midpoint of the long axis of the cell. The sequence is that of Cell division topological specificity factor from Clostridium botulinum (strain ATCC 19397 / Type A).